The chain runs to 498 residues: Pentatricopeptide repeat-containing protein At2g15980 (498 aa).

7 PPR repeats span residues 244–274 (NATT…MEEE), 280–314 (NVYS…GVVY), 315–349 (DIVA…GIEC), 350–384 (TCLT…GFEA), 385–423 (DGLT…MFYP), 424–458 (SRNC…GFKP), and 459–489 (SQET…MAES).

Belongs to the PPR family. P subfamily.

The polypeptide is Pentatricopeptide repeat-containing protein At2g15980 (Arabidopsis thaliana (Mouse-ear cress)).